The following is a 423-amino-acid chain: Serine--tRNA ligase (423 aa).

231–233 (TAE) is an L-serine binding site. 262–264 (RSE) is a binding site for ATP. Glutamate 285 is a binding site for L-serine. 349 to 352 (EIGS) lines the ATP pocket. Position 385 (serine 385) interacts with L-serine.

The protein belongs to the class-II aminoacyl-tRNA synthetase family. Type-1 seryl-tRNA synthetase subfamily. Homodimer. The tRNA molecule binds across the dimer.

It localises to the cytoplasm. The catalysed reaction is tRNA(Ser) + L-serine + ATP = L-seryl-tRNA(Ser) + AMP + diphosphate + H(+). It catalyses the reaction tRNA(Sec) + L-serine + ATP = L-seryl-tRNA(Sec) + AMP + diphosphate + H(+). Its pathway is aminoacyl-tRNA biosynthesis; selenocysteinyl-tRNA(Sec) biosynthesis; L-seryl-tRNA(Sec) from L-serine and tRNA(Sec): step 1/1. Catalyzes the attachment of serine to tRNA(Ser). Is also able to aminoacylate tRNA(Sec) with serine, to form the misacylated tRNA L-seryl-tRNA(Sec), which will be further converted into selenocysteinyl-tRNA(Sec). This Acholeplasma laidlawii (strain PG-8A) protein is Serine--tRNA ligase.